Reading from the N-terminus, the 234-residue chain is Ubiquinone biosynthesis O-methyltransferase (234 aa).

The S-adenosyl-L-methionine site is built by arginine 36, glycine 56, aspartate 77, and methionine 125.

Belongs to the methyltransferase superfamily. UbiG/COQ3 family.

It catalyses the reaction a 3-demethylubiquinol + S-adenosyl-L-methionine = a ubiquinol + S-adenosyl-L-homocysteine + H(+). It carries out the reaction a 3-(all-trans-polyprenyl)benzene-1,2-diol + S-adenosyl-L-methionine = a 2-methoxy-6-(all-trans-polyprenyl)phenol + S-adenosyl-L-homocysteine + H(+). Its pathway is cofactor biosynthesis; ubiquinone biosynthesis. O-methyltransferase that catalyzes the 2 O-methylation steps in the ubiquinone biosynthetic pathway. The chain is Ubiquinone biosynthesis O-methyltransferase from Actinobacillus pleuropneumoniae serotype 5b (strain L20).